The chain runs to 869 residues: Retrovirus-related Pol polyprotein from type-1 retrotransposable element R2 (869 aa).

Residues 199–475 (IFVFYGRVPS…DLWKYLGVVY (277 aa)) enclose the Reverse transcriptase domain. A nucleic acid-binding endonuclease region spans residues 601–869 (LYASISHSCK…FNNVTTVVHW (269 aa)).

It carries out the reaction DNA(n) + a 2'-deoxyribonucleoside 5'-triphosphate = DNA(n+1) + diphosphate. This chain is Retrovirus-related Pol polyprotein from type-1 retrotransposable element R2, found in Bradysia coprophila (Dark-winged fungus gnat).